The primary structure comprises 386 residues: Protein phosphatase methylesterase 1 (386 aa).

Residues 20 to 48 are disordered; that stretch reads ILEKLKGGQEPNSNEEGSDSIGDLPSLKN. Active-site residues include Ser-194, Asp-222, and His-348.

It belongs to the AB hydrolase superfamily.

The catalysed reaction is [phosphatase 2A protein]-C-terminal L-leucine methyl ester + H2O = [phosphatase 2A protein]-C-terminal L-leucine + methanol + H(+). Demethylates proteins that have been reversibly carboxymethylated. Demethylates the phosphatase PP2A catalytic subunit. This Candida glabrata (strain ATCC 2001 / BCRC 20586 / JCM 3761 / NBRC 0622 / NRRL Y-65 / CBS 138) (Yeast) protein is Protein phosphatase methylesterase 1 (PPE1).